Here is a 66-residue protein sequence, read N- to C-terminus: Large ribosomal subunit protein bL35 (66 aa).

Residues M1–R16 are compositionally biased toward basic residues. Positions M1–G21 are disordered.

Belongs to the bacterial ribosomal protein bL35 family.

This Streptococcus sanguinis (strain SK36) protein is Large ribosomal subunit protein bL35.